The sequence spans 160 residues: SsrA-binding protein (160 aa).

The protein belongs to the SmpB family.

The protein localises to the cytoplasm. Its function is as follows. Required for rescue of stalled ribosomes mediated by trans-translation. Binds to transfer-messenger RNA (tmRNA), required for stable association of tmRNA with ribosomes. tmRNA and SmpB together mimic tRNA shape, replacing the anticodon stem-loop with SmpB. tmRNA is encoded by the ssrA gene; the 2 termini fold to resemble tRNA(Ala) and it encodes a 'tag peptide', a short internal open reading frame. During trans-translation Ala-aminoacylated tmRNA acts like a tRNA, entering the A-site of stalled ribosomes, displacing the stalled mRNA. The ribosome then switches to translate the ORF on the tmRNA; the nascent peptide is terminated with the 'tag peptide' encoded by the tmRNA and targeted for degradation. The ribosome is freed to recommence translation, which seems to be the essential function of trans-translation. This chain is SsrA-binding protein, found in Erwinia tasmaniensis (strain DSM 17950 / CFBP 7177 / CIP 109463 / NCPPB 4357 / Et1/99).